Consider the following 443-residue polypeptide: uncharacterized protein (443 aa).

This is an uncharacterized protein from Saccharomyces cerevisiae (strain ATCC 204508 / S288c) (Baker's yeast).